The sequence spans 505 residues: DNA primase DnaG (505 aa).

In terms of domain architecture, Toprim spans 167-241 (DAVIVVEGRA…DVDYVAFAPP (75 aa)). 3 residues coordinate Mg(2+): glutamate 173, aspartate 215, and aspartate 217. The segment at 268-410 (DEPNLREAAT…PLDNEPRSIE (143 aa)) is disordered. Low complexity predominate over residues 318–327 (AGVVAGGARS). Acidic residues-rich tracts occupy residues 349–376 (GEVD…DAEF) and 384–402 (PNLD…DAPL).

The protein belongs to the archaeal DnaG primase family. In terms of assembly, forms a ternary complex with MCM helicase and DNA. Mg(2+) serves as cofactor.

The catalysed reaction is ssDNA + n NTP = ssDNA/pppN(pN)n-1 hybrid + (n-1) diphosphate.. Functionally, RNA polymerase that catalyzes the synthesis of short RNA molecules used as primers for DNA polymerase during DNA replication. The sequence is that of DNA primase DnaG from Halorubrum lacusprofundi (strain ATCC 49239 / DSM 5036 / JCM 8891 / ACAM 34).